The sequence spans 138 residues: Large-conductance mechanosensitive channel (138 aa).

The next 3 membrane-spanning stretches (helical) occupy residues 19–39, 40–60, and 81–101; these read VGVIIGAAFGAIVSSLVGDVI, MPVIGAITGGLDFSNYFIGLS, and GSFLTVTLNFLIIAFVLFIVI.

The protein belongs to the MscL family. Homopentamer.

The protein resides in the cell inner membrane. In terms of biological role, channel that opens in response to stretch forces in the membrane lipid bilayer. May participate in the regulation of osmotic pressure changes within the cell. This chain is Large-conductance mechanosensitive channel, found in Afipia carboxidovorans (strain ATCC 49405 / DSM 1227 / KCTC 32145 / OM5) (Oligotropha carboxidovorans).